The following is a 576-amino-acid chain: Nuclear receptor subfamily 1 group D member 2 (576 aa).

Residues 1–60 (MELNAGGVIAYISSSSSASSPASCHSEGSENSFQSSSSSVPSSPNSSNCDANGNPKNADI) are required for phosphorylation by CSNK1E and cytoplasmic localization. A modulating region spans residues 1-99 (MELNAGGVIA…HSGMTKFSGM (99 aa)). Over residues 13-47 (SSSSSASSPASCHSEGSENSFQSSSSSVPSSPNSS) the composition is skewed to low complexity. Positions 13–90 (SSSSSASSPA…TSAPGMTKSH (78 aa)) are disordered. A Phosphoserine; by GSK3-beta modification is found at Ser-46. Residues 100–176 (VLLCKVCGDV…VGMSRDAVRF (77 aa)) constitute a DNA-binding region (nuclear receptor). NR C4-type zinc fingers lie at residues 103–123 (CKVC…CEGC) and 140–164 (CLKN…FKKC). Residues Lys-162 and Lys-163 each carry the N6-acetyllysine; by KAT5 modification. Disordered regions lie at residues 215 to 246 (QHDQ…SDFA) and 263 to 282 (LYNQ…QRGE). 2 stretches are compositionally biased toward basic and acidic residues: residues 227-237 (LRPKSQLEQEN) and 263-272 (LYNQEHRENS). Disulfide bonds link Cys-334–Cys-340 and Cys-371–Cys-381. The 211-residue stretch at 366 to 576 (RNSYLCNTGG…EELLAFKVHP (211 aa)) folds into the NR LBD domain. Residues Cys-381 and His-565 each contribute to the heme site. The interval 394–576 (SGHEIWEEFS…EELLAFKVHP (183 aa)) is interaction with ZNHIT1.

This sequence belongs to the nuclear hormone receptor family. NR1 subfamily. Binds DNA as a monomer or a homodimer. Interacts with NCOA5 coactivator, leading to a strong increase of transcription of target genes. Interacts (via N-terminus) with KAT5. Interacts (via C-terminus) with HDAC1. Interacts with ZNHIT1. Interacts with SIAH2. Deacetylated by HDAC1. Acetylation and deacetylation regulate its transcriptional regulatory activity. In terms of processing, under more reducing intracellular redox conditions, Cys-381 is in its heme-bound state, which is optimal for recruitment of the NCOR1/HDAC3 corepressor complex and repression of target genes. When subjected to oxidative stress conditions, Cys-381 undergoes oxidation to form a disulfide bridge with Cys-371, also triggering a ligand switch that results in release of bound heme and derepression of target genes. Post-translationally, ubiquitinated by SIAH2; leading to its proteasomal degradation. Phosphorylated by CSNK1E; phosphorylation enhances its cytoplasmic localization. As to expression, ubiquitous. Expressed abundantly in skeletal muscle and brown adipose tissue. Expressed during skeletal muscle myogenesis.

The protein resides in the nucleus. The protein localises to the cytoplasm. With respect to regulation, the heme-bound form can bind gaseous signaling molecules such as CO and nitric oxide (NO) and NO can reverse its transcriptional repressor activity. Transcriptional repressor which coordinates circadian rhythm and metabolic pathways in a heme-dependent manner. Integral component of the complex transcription machinery that governs circadian rhythmicity and forms a critical negative limb of the circadian clock by directly repressing the expression of core clock components BMAL1 and CLOCK. Also regulates genes involved in metabolic functions, including lipid metabolism and the inflammatory response. Acts as a receptor for heme which stimulates its interaction with the NCOR1/HDAC3 corepressor complex, enhancing transcriptional repression. Recognizes two classes of DNA response elements within the promoter of its target genes and can bind to DNA as either monomers or homodimers, depending on the nature of the response element. Binds as a monomer to a response element composed of the consensus half-site motif 5'-[A/G]GGTCA-3' preceded by an A/T-rich 5' sequence (RevRE), or as a homodimer to a direct repeat of the core motif spaced by two nuclegotides (RevDR-2). Acts as a potent competitive repressor of ROR alpha (RORA) function and also negatively regulates the expression of NR1D1. Regulates lipid and energy homeostasis in the skeletal muscle via repression of genes involved in lipid metabolism and myogenesis including: CD36, FABP3, FABP4, UCP3, SCD1 and MSTN. Regulates hepatic lipid metabolism via the repression of APOC3. Represses gene expression at a distance in macrophages by inhibiting the transcription of enhancer-derived RNAs (eRNAs). In addition to its activity as a repressor, can also act as a transcriptional activator. Acts as a transcriptional activator of the sterol regulatory element-binding protein 1 (SREBF1) and the inflammatory mediator interleukin-6 (IL6) in the skeletal muscle. Plays a role in the regulation of circadian sleep/wake cycle; essential for maintaining wakefulness during the dark phase or active period. Key regulator of skeletal muscle mitochondrial function; negatively regulates the skeletal muscle expression of core clock genes and genes involved in mitochondrial biogenesis, fatty acid beta-oxidation and lipid metabolism. May play a role in the circadian control of neutrophilic inflammation in the lung. The chain is Nuclear receptor subfamily 1 group D member 2 from Mus musculus (Mouse).